The primary structure comprises 267 residues: 7alpha-hydroxysteroid dehydrogenase (267 aa).

NADP(+) contacts are provided by residues 13–18, R38, 63–64, and N90; these read SATRGI and DA. Residues S145 and Y158 each contribute to the cholate site. NADP(+) contacts are provided by residues Y158, K162, and 191–195; that span reads IATDA. Y158 acts as the Proton acceptor in catalysis.

The protein belongs to the short-chain dehydrogenases/reductases (SDR) family. As to quaternary structure, homotetramer.

The enzyme catalyses cholate + NADP(+) = 3alpha,12alpha-dihydroxy-7-oxo-5beta-cholanate + NADPH + H(+). It carries out the reaction chenodeoxycholate + NADP(+) = 7-oxolithocholate + NADPH + H(+). 7alpha-hydroxysteroid dehydrogenase that catalyzes the NADP(+)-dependent oxidation of the 7alpha-hydroxy group of 7alpha-hydroxysteroids, such as the major human bile acids cholate and chenodeoxycholate, to the corresponding 7-oxosteroids. Is thus liley involved in the metabolism of primary bile acids. The protein is 7alpha-hydroxysteroid dehydrogenase of Paraclostridium sordellii (Clostridium sordellii).